Here is a 179-residue protein sequence, read N- to C-terminus: MSRDRDRARPDTRLSSSDNESDDEDYQLPHSHPEYGSDSSDQDFELNNVGKFCPLPWKPDVARLCADTNKLFRCFIRCRLNSGPFHDALRRALFDIHMIGRMGYRLKQAEWETIMNLTPRQSLHLRRTLRDADSRSAHPISDIYASDSIFHPIAASSGTISSDCDVKGMNDLSVDSKLH.

Residues 1–12 (MSRDRDRARPDT) show a composition bias toward basic and acidic residues. The tract at residues 1–40 (MSRDRDRARPDTRLSSSDNESDDEDYQLPHSHPEYGSDSS) is disordered.

This sequence belongs to the herpesviridae ICP22 family.

The protein is Transcriptional regulator ICP22 homolog (MDV088) of Gallid herpesvirus 2 (strain Chicken/Md5/ATCC VR-987) (GaHV-2).